We begin with the raw amino-acid sequence, 185 residues long: Ribosome-recycling factor (185 aa).

Belongs to the RRF family.

It is found in the cytoplasm. Functionally, responsible for the release of ribosomes from messenger RNA at the termination of protein biosynthesis. May increase the efficiency of translation by recycling ribosomes from one round of translation to another. The chain is Ribosome-recycling factor from Kineococcus radiotolerans (strain ATCC BAA-149 / DSM 14245 / SRS30216).